The sequence spans 537 residues: uncharacterized protein (537 aa).

This is an uncharacterized protein from Bacillus subtilis (strain 168).